Consider the following 1081-residue polypeptide: MYFDKDNSMSPRPLLPSDEQKLNINLLTKKEKFSHLDPHYDAKATPQRSTSNRNVGDLLLEKRTAKPMIQKALTNTDNFIEMYHNQQRKNLDDDTIKEVMINDENGKTVASTNDGRYDNDYDNNDINDQKTLDNIAGSPHMEKNRNKVKIEHDSSSQKPIAKESSKAQKNIIKKGIKDFKFGSVIGDGAYSTVMLATSIDTKKRYAAKVLNKEYLIRQKKVKYVSIEKTALQKLNNSPSVVRLFSTFQDESSLYFLLEYAPNGDFLSLMKKYGSLDETCARYYAAQIIDAIDYLHSNGIIHRDIKPENILLDGEMKIKLTDFGTAKLLNPTNNSVSKPEYDLSTRSKSFVGTAEYVSPELLNDSFTDYRCDIWAFGCILFQMIAGKPPFKATNEYLTFQKVMKVQYAFTPGFPLIIRDLVKKILVKNLDRRLTISQIKEHHFFKDLNFKDGSVWSKTPPEIKPYKINAKSMQAMPSGSDRKLVKKSVNTLGKSHLVTQRSASSPSVEETTHSTLYNNNTHASTESEISIKKRPTDERTAQILENARKGINNRKNQPGKRTPSGAASAALAASAALTKKTMQSYPTSSSKSSRSSSPATTSRPGTYKRTSSTESKPFAKSPPLSASVLSSKVPMPPYTPPMSPPMTPYDTYQMTPPYTTKQQDYSDTAIAAPKPCISKQNVKNSTDSPLMNKQDIQWSFYLKNINEHVLRTEKLDFVTTNYDILEKKMLKLNGSLLDPQLFGKPRHTFLSQVARSGGEVTGFRNDPTMTAYSKTEDTYYSKNIIDLQLLEDDYRIEGGDLSELLTNRSGEGYKCNQNSSPMKDDDKSESNNKGSSVFSGKIKKLFHPTSAAETLSSSDEKTKYYKRTIVMTSFGRFLVFAKRRQPNPVTNLKYELEYDINLRQQGTKIKELIIPLEMGTNHIVVIQTPYKSFLLSTDKKTTSKLFTVLKKILNSNTNKIEKELLQRNQKVIERRTSSSGRAIPKDLPTSKSPSPKPRTHSQSPSISKHNSFSESINSAKSNRSSRIFETFINAKEQNSKKHAAPVPLTSKLVNGLPKRQVTVGLGLNTGTNFKNSSAKSKRS.

S138 is modified (phosphoserine). The region spanning 179 to 443 is the Protein kinase domain; that stretch reads FKFGSVIGDG…ISQIKEHHFF (265 aa). ATP contacts are provided by residues 189–191 and K208; that span reads AYS. The interval 210 to 255 is PIF-pocket; sequence LNKEYLIRQKKVKYVSIEKTALQKLNNSPSVVRLFSTFQDESSLYF. ATP-binding positions include 258-260 and D264; that span reads EYA. D303 functions as the Proton acceptor in the catalytic mechanism. 2 residues coordinate ATP: E307 and D321. Residues 494 to 526 are compositionally biased toward polar residues; the sequence is HLVTQRSASSPSVEETTHSTLYNNNTHASTESE. Disordered regions lie at residues 494 to 652, 805 to 833, and 970 to 1017; these read HLVT…TYQM, NRSGEGYKCNQNSSPMKDDDKSESNNKGS, and IERR…INSA. Residues 527–538 are compositionally biased toward basic and acidic residues; it reads ISIKKRPTDERT. Composition is skewed to low complexity over residues 564–575 and 582–602; these read AASAALAASAAL and SYPTSSSKSSRSSSPATTSRP. Phosphoserine is present on S619. A compositionally biased stretch (pro residues) spans 632–645; the sequence is PMPPYTPPMSPPMT. Polar residues-rich tracts occupy residues 805 to 819 and 998 to 1017; these read NRSGEGYKCNQNSSP and HSQSPSISKHNSFSESINSA. Position 1009 is a phosphoserine (S1009).

Belongs to the protein kinase superfamily. AGC Ser/Thr protein kinase family. PDPK1 subfamily.

The protein resides in the nucleus. It localises to the cytoplasm. The protein localises to the cell cortex. It catalyses the reaction L-seryl-[protein] + ATP = O-phospho-L-seryl-[protein] + ADP + H(+). It carries out the reaction L-threonyl-[protein] + ATP = O-phospho-L-threonyl-[protein] + ADP + H(+). With respect to regulation, sphingoid base activates kinase activity. Serine/threonine-protein kinase which is part sphingolipid-mediated signaling pathway that is required for the internalization step of endocytosis by regulating eisosome assembly and organization, and modulating the organization of the plasma membrane. Phosphorylates and activates PKC1. Activates YPK1 and YPK2, 2 components of signaling cascade required for maintenance of cell wall integrity. Required for stress-induced P-body assembly and regulates global mRNA decay at the deadenylation step. This Saccharomyces cerevisiae (strain ATCC 204508 / S288c) (Baker's yeast) protein is Serine/threonine-protein kinase PKH2 (PKH2).